Consider the following 514-residue polypeptide: Carboxysome shell carbonic anhydrase (514 aa).

The segment at 1-144 (MNTRNTRSKQ…LTAATEQFSR (144 aa)) is N-terminal domain. Residues 151–397 (DDSASAIGFF…GRYPPNDIGH (247 aa)) are catalytic domain. Cysteine 173 is a Zn(2+) binding site. Residue aspartate 175 is the Proton acceptor of the active site. 2 residues coordinate Zn(2+): histidine 242 and cysteine 253. Residues 398-514 (AERYISVGDG…GSPIEEVASA (117 aa)) form a C-terminal domain region.

Belongs to the beta-class carbonic anhydrase family. CsoSCA subfamily. Homodimer, may form filaments. Zn(2+) serves as cofactor.

Its subcellular location is the carboxysome. It carries out the reaction hydrogencarbonate + H(+) = CO2 + H2O. Carbonic anhydrase activity is inhibited by ethoxyzolamide, dithiothreitol, cyanide, and divalent metal chelators dipicolinic acid and nitrilotriacetic acid. In terms of biological role, reversible hydration of carbon dioxide. Essential for chemolithotrophic carbon dioxide fixation, supplies CO(2) to RuBisCO (ribulose bisphosphate carboxylase, cbbL-cbbS) in the carboxysome. There are estimated to be 40 CsoSCA dimers per carboxysome. Functionally, unlike beta-carboxysomes, alpha-carboxysomes (Cb) can form without cargo protein. CsoS2 is essential for Cb formation and is also capable of targeting foreign proteins to the Cb. The Cb shell assembles with the aid of CsoS2; CsoS1A, CsoS1B and CsoS1C form the majority of the shell while CsoS4A and CsoS4B form vertices. CsoS1D forms pseudohexamers that probably control metabolite flux into and out of the shell. This is Carboxysome shell carbonic anhydrase from Halothiobacillus neapolitanus (strain ATCC 23641 / c2) (Thiobacillus neapolitanus).